A 241-amino-acid polypeptide reads, in one-letter code: MPNYLLRLAFVGTNFYGWQVQPNLRTVQGEIQKALSQILCEDVKVTGCCRTDSGVHALDYIANFKTQKDFPEEKLLKALNGILPKDVGVYAVKKVSEEFNARYSVKGKVYLYKIWNSEVRNPFLYPFSWQVKREINTEVLRNILKKFEGTHDFRALTKLEEERNTVINLEEVSLNVEYPLIEIRLKASHFLRYMVRRIVGTAVKISLGLYSEEVLEELLQGKGNSPYTAPPQGLHLEKVLL.

Aspartate 52 serves as the catalytic Nucleophile. Tyrosine 110 provides a ligand contact to substrate.

It belongs to the tRNA pseudouridine synthase TruA family. Homodimer.

It catalyses the reaction uridine(38/39/40) in tRNA = pseudouridine(38/39/40) in tRNA. Functionally, formation of pseudouridine at positions 38, 39 and 40 in the anticodon stem and loop of transfer RNAs. In Aquifex aeolicus (strain VF5), this protein is tRNA pseudouridine synthase A.